We begin with the raw amino-acid sequence, 139 residues long: Large ribosomal subunit protein uL16 (139 aa).

Basic residues predominate over residues 1–19 (MLIPRRVKHRKQHHPKRSG). Residues 1 to 25 (MLIPRRVKHRKQHHPKRSGMSKGGT) are disordered.

It belongs to the universal ribosomal protein uL16 family. Part of the 50S ribosomal subunit.

Binds 23S rRNA and is also seen to make contacts with the A and possibly P site tRNAs. The sequence is that of Large ribosomal subunit protein uL16 from Streptomyces griseus subsp. griseus (strain JCM 4626 / CBS 651.72 / NBRC 13350 / KCC S-0626 / ISP 5235).